A 416-amino-acid chain; its full sequence is 3-oxoacyl-[acyl-carrier-protein] synthase 2 (416 aa).

The Ketosynthase family 3 (KS3) domain occupies 6 to 414 (KKRVVVTGLG…GHNVTLAFKK (409 aa)). Residues Cys-167, His-307, and His-344 each act as for beta-ketoacyl synthase activity in the active site.

This sequence belongs to the thiolase-like superfamily. Beta-ketoacyl-ACP synthases family. Homodimer.

The enzyme catalyses a fatty acyl-[ACP] + malonyl-[ACP] + H(+) = a 3-oxoacyl-[ACP] + holo-[ACP] + CO2. It carries out the reaction (9Z)-hexadecenoyl-[ACP] + malonyl-[ACP] + H(+) = 3-oxo-(11Z)-octadecenoyl-[ACP] + holo-[ACP] + CO2. It functions in the pathway lipid metabolism; fatty acid biosynthesis. Involved in the type II fatty acid elongation cycle. Catalyzes the elongation of a wide range of acyl-ACP by the addition of two carbons from malonyl-ACP to an acyl acceptor. Can efficiently catalyze the conversion of palmitoleoyl-ACP (cis-hexadec-9-enoyl-ACP) to cis-vaccenoyl-ACP (cis-octadec-11-enoyl-ACP), an essential step in the thermal regulation of fatty acid composition. This Synechocystis sp. (strain ATCC 27184 / PCC 6803 / Kazusa) protein is 3-oxoacyl-[acyl-carrier-protein] synthase 2 (fabF).